The sequence spans 647 residues: DNA mismatch repair protein MutL (647 aa).

The disordered stretch occupies residues 375–433 (KQEEPQAVKQPTQLWQPPKQEWQPPQSLVREEQSWQPSTKPIIEEPIQEEKSWDSNEEG). Low complexity predominate over residues 387–400 (QLWQPPKQEWQPPQ).

Belongs to the DNA mismatch repair MutL/HexB family.

This protein is involved in the repair of mismatches in DNA. It is required for dam-dependent methyl-directed DNA mismatch repair. May act as a 'molecular matchmaker', a protein that promotes the formation of a stable complex between two or more DNA-binding proteins in an ATP-dependent manner without itself being part of a final effector complex. This is DNA mismatch repair protein MutL from Bacillus cereus (strain AH820).